A 579-amino-acid chain; its full sequence is Cytochrome P450 monooxygenase ORF6 (579 aa).

N-linked (GlcNAc...) asparagine glycosylation is present at N2. The chain crosses the membrane as a helical span at residues 7–29 (PLGSFVGTTLLLFILYKLVKLAY). N194 and N390 each carry an N-linked (GlcNAc...) asparagine glycan. C512 lines the heme pocket.

The protein belongs to the cytochrome P450 family. It depends on heme as a cofactor.

It localises to the membrane. It participates in sesquiterpene biosynthesis. Functionally, cytochrome P450 monooxygenase; part of the gene cluster that mediates the biosynthesis of PR-toxin, a bicyclic sesquiterpene belonging to the eremophilane class and acting as a mycotoxin. The first step of the pathway is catalyzed by the aristolochene synthase which performs the cyclization of trans,trans-farnesyl diphosphate (FPP) to the bicyclic sesquiterpene aristolochene. Following the formation of aristolochene, the non-oxygenated aristolochene is converted to the trioxygenated intermediate eremofortin B, via 7-epi-neopetasone. This conversion appears to involve three enzymes, a hydroxysterol oxidase-like enzyme, the quinone-oxidase prx3 that forms the quinone-type-structure in the bicyclic nucleus of aristolochene with the C8-oxo group and the C-3 hydroxyl group, and the P450 monooxygenase ORF6 that introduces the epoxide at the double bond between carbons 1 and 2. No monoxy or dioxy-intermediates have been reported to be released to the broth, so these three early oxidative reactions may be coupled together. Eremofortin B is further oxidized by another P450 monooxygenase, that introduces a second epoxide between carbons 7 and 11 prior to acetylation to eremofortin A by the acetyltransferase ORF8. The second epoxidation may be performed by a second P450 monooxygenase. After the acetylation step, eremofortin A is converted to eremofortin C and then to PR-toxin. First the conversion of eremofortin A to eremofortin C proceeds by oxidation of the side chain of the molecule at C-12 and is catalyzed by the short-chain oxidoreductase prx1. The cytochrome P450 monooxygenase ORF6 is probably also involved in this step. The primary alcohol formed at C-12 is finally oxidized by the short-chain alcohol dehydrogenase prx4 that forms PR-toxin. The chain is Cytochrome P450 monooxygenase ORF6 from Penicillium roqueforti (strain FM164).